The chain runs to 325 residues: Tetraacyldisaccharide 4'-kinase (325 aa).

ATP is bound at residue 53–60; it reads SVGGNGKT.

It belongs to the LpxK family.

The catalysed reaction is a lipid A disaccharide + ATP = a lipid IVA + ADP + H(+). It participates in glycolipid biosynthesis; lipid IV(A) biosynthesis; lipid IV(A) from (3R)-3-hydroxytetradecanoyl-[acyl-carrier-protein] and UDP-N-acetyl-alpha-D-glucosamine: step 6/6. Transfers the gamma-phosphate of ATP to the 4'-position of a tetraacyldisaccharide 1-phosphate intermediate (termed DS-1-P) to form tetraacyldisaccharide 1,4'-bis-phosphate (lipid IVA). In Actinobacillus succinogenes (strain ATCC 55618 / DSM 22257 / CCUG 43843 / 130Z), this protein is Tetraacyldisaccharide 4'-kinase.